A 68-amino-acid polypeptide reads, in one-letter code: Copper transport protein ATOX1 (68 aa).

The region spanning 1–63 is the HMA domain; sequence MPKHEFSVDM…TLNKTGKAVS (63 aa). Cu cation-binding residues include Cys-12 and Cys-15. Ser-47 carries the phosphoserine modification. An N6-acetyllysine modification is found at Lys-60.

This sequence belongs to the ATX1 family. In terms of assembly, homodimer. Interacts with ATP7B. Interacts with ATP7A. Interacts (via dimer form) with SLC31A1 (via C-terminal domain); this interaction improves ATOX1 stability and controls intracellular Cu(I) levels.

Its function is as follows. Binds and deliver cytosolic copper to the copper ATPase proteins. May be important in cellular antioxidant defense. This is Copper transport protein ATOX1 from Mus musculus (Mouse).